A 285-amino-acid chain; its full sequence is Phosphate import ATP-binding protein PstB (285 aa).

The 242-residue stretch at 39 to 280 (LEVSDLQLWY…PAKKQTEDYI (242 aa)) folds into the ABC transporter domain. 71–78 (GPSGCGKS) lines the ATP pocket.

This sequence belongs to the ABC transporter superfamily. Phosphate importer (TC 3.A.1.7) family. The complex is composed of two ATP-binding proteins (PstB), two transmembrane proteins (PstC and PstA) and a solute-binding protein (PstS).

Its subcellular location is the cell inner membrane. The enzyme catalyses phosphate(out) + ATP + H2O = ADP + 2 phosphate(in) + H(+). Part of the ABC transporter complex PstSACB involved in phosphate import. Responsible for energy coupling to the transport system. This chain is Phosphate import ATP-binding protein PstB, found in Alkalilimnicola ehrlichii (strain ATCC BAA-1101 / DSM 17681 / MLHE-1).